Consider the following 750-residue polypeptide: Methylmalonyl-CoA mutase, mitochondrial (750 aa).

A mitochondrion-targeting transit peptide spans 1–32 (MLRAKNQLFLLSPHYLRQVKESSGSRLIQQRL). Q50 contacts malonyl-CoA. K89 carries the post-translational modification N6-acetyllysine. Residues 96 to 99 (YPTM) and 106 to 110 (TIRQY) each bind malonyl-CoA. At K212 the chain carries N6-acetyllysine. Residues 216-218 (TIQ), R228, K255, H265, and 304-306 (RLS) each bind malonyl-CoA. K335 is subject to N6-acetyllysine. K343 is modified (N6-succinyllysine). S481 bears the Phosphoserine mark. K595 bears the N6-succinyllysine mark. At K602 the chain carries N6-acetyllysine. Residues 614 to 746 (RPRLLVAKMG…DDIEKCLEKK (133 aa)) form the B12-binding domain. H627 is a binding site for adenosylcob(III)alamin.

Belongs to the methylmalonyl-CoA mutase family. Homodimer. Interacts (the apoenzyme form) with MMAA; the interaction is GTP dependent. The cofactor is adenosylcob(III)alamin.

The protein resides in the mitochondrion matrix. The protein localises to the mitochondrion. It localises to the cytoplasm. The catalysed reaction is (R)-methylmalonyl-CoA = succinyl-CoA. Its activity is regulated as follows. During catalysis, accumulation of oxidized inactive cofactor hydroxocobalamin (OH2Cbl) leads to loss of MMUT activity. Interaction with MMAA decreases the rate of OH2Cbl formation and promotes the replacement of OH2Cbl by the active cofactor adenosylcobalamin (AdoCbl), thereby restoring MMUT activity. Inhibited by itaconyl-CoA, a metabolite that inactivates the coenzyme B12 cofactor. Inhibited at high concentration of substrate. Its function is as follows. Catalyzes the reversible isomerization of methylmalonyl-CoA (MMCoA) (generated from branched-chain amino acid metabolism and degradation of dietary odd chain fatty acids and cholesterol) to succinyl-CoA (3-carboxypropionyl-CoA), a key intermediate of the tricarboxylic acid cycle. This is Methylmalonyl-CoA mutase, mitochondrial from Homo sapiens (Human).